Here is a 194-residue protein sequence, read N- to C-terminus: Imidazoleglycerol-phosphate dehydratase (194 aa).

The protein belongs to the imidazoleglycerol-phosphate dehydratase family.

It localises to the cytoplasm. It catalyses the reaction D-erythro-1-(imidazol-4-yl)glycerol 3-phosphate = 3-(imidazol-4-yl)-2-oxopropyl phosphate + H2O. It functions in the pathway amino-acid biosynthesis; L-histidine biosynthesis; L-histidine from 5-phospho-alpha-D-ribose 1-diphosphate: step 6/9. This chain is Imidazoleglycerol-phosphate dehydratase, found in Clostridium kluyveri (strain NBRC 12016).